We begin with the raw amino-acid sequence, 633 residues long: ATP-dependent clpX-like chaperone, mitochondrial (633 aa).

Residues methionine 1–serine 56 constitute a mitochondrion transit peptide. The tract at residues aspartate 68–glycine 100 is disordered. A compositionally biased stretch (basic and acidic residues) spans glycine 69–alanine 83. The span at serine 84 to serine 93 shows a compositional bias: low complexity. Residues serine 93–isoleucine 146 form the ClpX-type ZB domain. Zn(2+) is bound by residues cysteine 105, cysteine 108, cysteine 127, and cysteine 130. Proline 294–leucine 301 contributes to the ATP binding site. Lysine 437 is subject to N6-acetyllysine. Over residues lysine 598–serine 610 the composition is skewed to basic and acidic residues. Positions lysine 598–serine 633 are disordered. Residues serine 611–glutamate 622 show a composition bias toward acidic residues. Serine 617 is subject to Phosphoserine.

The protein belongs to the ClpX chaperone family. Homohexamer that forms a ring structure; this hexamerization requires ATP binding. Component of the ClpXP complex formed by the assembly of two CLPP heptameric rings with two CLPX hexameric rings, giving rise to a symmetrical structure with two central CLPP rings flanked by a CLPX ring at either end of the complex. Interacts with TFAM. In terms of tissue distribution, higher expression in skeletal muscle and heart and to a lesser extent in liver, brain, placenta, lung, kidney and pancreas.

It is found in the mitochondrion. It localises to the mitochondrion matrix. The protein localises to the mitochondrion nucleoid. It carries out the reaction ATP + H2O = ADP + phosphate + H(+). ATP-dependent chaperone that functions as an unfoldase. As part of the ClpXP protease complex, it recognizes specific protein substrates, unfolds them using energy derived from ATP hydrolysis, and then translocates them to the proteolytic subunit (CLPP) of the ClpXP complex for degradation. Thanks to its chaperone activity, it also functions in the incorporation of the pyridoxal phosphate cofactor into 5-aminolevulinate synthase, thereby activating 5-aminolevulinate (ALA) synthesis, the first step in heme biosynthesis. This chaperone is also involved in the control of mtDNA nucleoid distribution, by regulating mitochondrial transcription factor A (TFAM) activity. This chain is ATP-dependent clpX-like chaperone, mitochondrial, found in Homo sapiens (Human).